The following is a 610-amino-acid chain: Synaptotagmin-like protein 3 (610 aa).

The RabBD domain occupies 4-123; it reads EIDLSALKEL…IKTGEWFYEE (120 aa). Positions 219-239 are disordered; it reads RQCVGQTERRSQSDTAVNVTT. C2 domains lie at 306–428 and 462–603; these read VTGE…TQSF and RPRK…NLWT.

Monomer. Binds NRXN1. Binds RAB27A that has been activated by GTP-binding via its N-terminus.

The protein resides in the endomembrane system. In terms of biological role, may act as Rab effector protein and play a role in vesicle trafficking. Binds phospholipids in the presence of calcium ions. The protein is Synaptotagmin-like protein 3 (SYTL3) of Homo sapiens (Human).